The sequence spans 165 residues: Nucleotide-binding protein Rcas_1283 (165 aa).

Belongs to the YajQ family.

Nucleotide-binding protein. In Roseiflexus castenholzii (strain DSM 13941 / HLO8), this protein is Nucleotide-binding protein Rcas_1283.